A 143-amino-acid chain; its full sequence is Transcriptional regulator MraZ (143 aa).

SpoVT-AbrB domains lie at threonine 5–glutamate 47 and alanine 76–serine 119.

This sequence belongs to the MraZ family. In terms of assembly, forms oligomers.

The protein resides in the cytoplasm. It localises to the nucleoid. The polypeptide is Transcriptional regulator MraZ (Corynebacterium jeikeium (strain K411)).